A 1032-amino-acid chain; its full sequence is MADIKIDSKVFQERVSHFYNAWKADKRSGDALFGGVSSIVILMGKVDENPEFHKNNAIHFWLLGYEFPTTLMLFTLDTIYILTTQKKAKYLDQVKGGRYPVEVLVRGKDAAENEKLFIKITDAIKAAGKKVGVLTKDTSKGPFIDEWKKVYADNCKDVEEVDVAQALSAGAFSVKDETELRAMRTSSKACVALLTPYFLDEMSNILDQDKKIKHSALADKVFNKLEDDKFWKTVELPNRQKLPADLDPEQLDWILGPIVQSGGKFDLKWQADSDNDILHPGIIIAAMGLRYKSYCSQIARTFMVDPNKSQESNYKFLLAVHNLILKEIRDGAIVKDVYTKAYNFVRSKKPDLEKHFLKNVGFGIGLENKDPTLILNNKNTRTLKDGMTLVVTTGFSDIQNPNPQDKNSKVYSLILSDTIRVTSSEPVVFTGEAPVDVDATSFFFKDEEEAQPTPKKEKRDSRVGAVATKNITSTRLRSERNTTVDEDADKRRREHQKELAQKKQKEGLAKYAESTADENGVEIKKFKRFESYKRDNQFPPKVKDMGIVIDQKNATIVLPVMGRPVPFHINTIKNASKSDEGEWSFLRINFLSPGQGVGRKDEQPFEDASAHFVRSLTFKSTDGDRYADIANQISNLKRDAVKKEQEKKDMEDVVEQDKLVEIRNRRPAVLDNVFIRPAMEGKRVPGKVEIHQNGIRYQSPLSTTQRVDILFSNVRHLFFQPCQHELIVIIHIHLKDPIIIGNKKKTKDVQFYREATDIQFDETGNRKRKYRYGDEDEFEAEQEERRRRAELDRLFKSFAEKIAEAGRNEGIEVDMPLRDLGFNGVPFRSNVYIQPTTECLIQITEPPFMVITLEDIEVAHLERVQFGLKNFDLVFVFKDFTRPPYHINTIPVESLEDVKEFLDSSDIAFSEGPLNLNWGVIMKTVTANTHQFFLDGGWGFLQNDSDDDEVEEEEEESAFEIDESELEDASESSEEDSEYDSNASEEASDEAEDSEEEEGEDWDELERKAKKRDRESGFDDEEERAAPKKRRK.

Positions 446–513 (DEEEAQPTPK…QKEGLAKYAE (68 aa)) are disordered. Residues 476–508 (LRSERNTTVDEDADKRRREHQKELAQKKQKEGL) show a composition bias toward basic and acidic residues. 4 coiled-coil regions span residues 485–506 (DEDADKRRREHQKELAQKKQKE), 624–658 (DRYADIANQISNLKRDAVKKEQEKKDMEDVVEQDK), 785–805 (RRRRAELDRLFKSFAEKIAEA), and 949–1010 (EVEE…RKAK). The interval 943-1032 (NDSDDDEVEE…ERAAPKKRRK (90 aa)) is disordered. Composition is skewed to acidic residues over residues 944–979 (DSDDDEVEEEEEESAFEIDESELEDASESSEEDSEY) and 986–1004 (EASDEAEDSEEEEGEDWDE).

Belongs to the peptidase M24 family. SPT16 subfamily. Forms a stable heterodimer with ctc-1/pob3. The dimer of ctc-1 and ctc-2 weakly associates with multiple molecules of nhp-1/nhp6 to form the FACT complex.

The protein resides in the nucleus. The protein localises to the chromosome. Functionally, component of the FACT complex, a general chromatin factor that acts to reorganize nucleosomes. The FACT complex is involved in multiple processes that require DNA as a template such as mRNA elongation, DNA replication and DNA repair. During transcription elongation the FACT complex acts as a histone chaperone that both destabilizes and restores nucleosomal structure. It facilitates the passage of RNA polymerase II and transcription by promoting the dissociation of one histone H2A-H2B dimer from the nucleosome, then subsequently promotes the reestablishment of the nucleosome following the passage of RNA polymerase II. The polypeptide is FACT complex subunit ctc-2 (ctc-2) (Neurospora crassa (strain ATCC 24698 / 74-OR23-1A / CBS 708.71 / DSM 1257 / FGSC 987)).